The chain runs to 238 residues: MPVNLSMTPINKAKAWGVHAVTASGVILALLALLALVDNKPQACLLWLGLALLVDGLDGTLARKYEVKEMLPHFDGSVLDLVIDYLTYVFIPAIFIYRYIPLPEHFELLAVGVILVSSLFCFCNVNMKSTDNYFVGFPAAWNVVAVYFYVLDLHPWVNLATVLVLAALTLTRMKFLHPFRVRQFMPLNIAVTFVWLISSGLLIVQQPADLPILLGLWFAASAYFVGICLWRSAREWFG.

Over 1 to 16 the chain is Cytoplasmic; that stretch reads MPVNLSMTPINKAKAW. A helical transmembrane segment spans residues 17-37; the sequence is GVHAVTASGVILALLALLALV. Residues 38 to 41 lie on the Periplasmic side of the membrane; the sequence is DNKP. A helical transmembrane segment spans residues 42–62; it reads QACLLWLGLALLVDGLDGTLA. Residues 63 to 75 are Cytoplasmic-facing; the sequence is RKYEVKEMLPHFD. The helical transmembrane segment at 76-96 threads the bilayer; that stretch reads GSVLDLVIDYLTYVFIPAIFI. At 97–104 the chain is on the periplasmic side; the sequence is YRYIPLPE. The helical transmembrane segment at 105–125 threads the bilayer; that stretch reads HFELLAVGVILVSSLFCFCNV. Over 126 to 132 the chain is Cytoplasmic; sequence NMKSTDN. Residues 133 to 153 form a helical membrane-spanning segment; the sequence is YFVGFPAAWNVVAVYFYVLDL. The Periplasmic segment spans residues 154 to 155; that stretch reads HP. A helical transmembrane segment spans residues 156–176; the sequence is WVNLATVLVLAALTLTRMKFL. Residues 177-183 are Cytoplasmic-facing; sequence HPFRVRQ. A helical membrane pass occupies residues 184 to 204; it reads FMPLNIAVTFVWLISSGLLIV. Over 205–209 the chain is Periplasmic; it reads QQPAD. Residues 210-230 traverse the membrane as a helical segment; that stretch reads LPILLGLWFAASAYFVGICLW. Over 231-238 the chain is Cytoplasmic; sequence RSAREWFG.

This sequence belongs to the CDP-alcohol phosphatidyltransferase class-I family. Mn(2+) serves as cofactor.

Its subcellular location is the cell inner membrane. The catalysed reaction is a CDP-1,2-diacyl-sn-glycerol + choline = a 1,2-diacyl-sn-glycero-3-phosphocholine + CMP + H(+). Functionally, condenses choline with CDP-diglyceride to produce phosphatidylcholine and CMP. This chain is Phosphatidylcholine synthase, found in Pseudomonas aeruginosa (strain ATCC 15692 / DSM 22644 / CIP 104116 / JCM 14847 / LMG 12228 / 1C / PRS 101 / PAO1).